We begin with the raw amino-acid sequence, 203 residues long: Transmembrane emp24 domain-containing protein (203 aa).

A signal peptide spans 1–22 (MASIRLLPSCIVLMFLARSSLC). Topologically, residues 23-170 (YFITIDAHGE…RSINDNTNSR (148 aa)) are lumenal. The region spanning 32–114 (EECFHDKVTS…PKVLKFSMDI (83 aa)) is the GOLD domain. Residues 171 to 191 (VVWWSFFESLVLVAMTLGQVY) form a helical membrane-spanning segment. Residues 192-203 (YLKRFFEVRRVV) are Cytoplasmic-facing.

This sequence belongs to the EMP24/GP25L family.

Its subcellular location is the cytoplasmic vesicle membrane. In terms of biological role, could have a role in the budding of coatomer-coated and other species of coated vesicles. This Nematostella vectensis (Starlet sea anemone) protein is Transmembrane emp24 domain-containing protein.